Consider the following 78-residue polypeptide: Acyl carrier protein (78 aa).

One can recognise a Carrier domain in the interval 1–76 (MALFEDIQAV…DVVKYIEDNK (76 aa)). Ser-36 is modified (O-(pantetheine 4'-phosphoryl)serine).

The protein belongs to the acyl carrier protein (ACP) family. In terms of processing, 4'-phosphopantetheine is transferred from CoA to a specific serine of apo-ACP by AcpS. This modification is essential for activity because fatty acids are bound in thioester linkage to the sulfhydryl of the prosthetic group.

It localises to the cytoplasm. It participates in lipid metabolism; fatty acid biosynthesis. Its function is as follows. Carrier of the growing fatty acid chain in fatty acid biosynthesis. The chain is Acyl carrier protein from Helicobacter pylori (strain G27).